A 92-amino-acid chain; its full sequence is Large ribosomal subunit protein bL25 (92 aa).

Belongs to the bacterial ribosomal protein bL25 family. As to quaternary structure, part of the 50S ribosomal subunit; part of the 5S rRNA/L5/L18/L25 subcomplex. Contacts the 5S rRNA. Binds to the 5S rRNA independently of L5 and L18.

This is one of the proteins that binds to the 5S RNA in the ribosome where it forms part of the central protuberance. The chain is Large ribosomal subunit protein bL25 from Vibrio vulnificus (strain CMCP6).